The primary structure comprises 197 residues: Probable nicotinate-nucleotide adenylyltransferase (197 aa).

This sequence belongs to the NadD family.

The enzyme catalyses nicotinate beta-D-ribonucleotide + ATP + H(+) = deamido-NAD(+) + diphosphate. Its pathway is cofactor biosynthesis; NAD(+) biosynthesis; deamido-NAD(+) from nicotinate D-ribonucleotide: step 1/1. In terms of biological role, catalyzes the reversible adenylation of nicotinate mononucleotide (NaMN) to nicotinic acid adenine dinucleotide (NaAD). This Chlorobium phaeobacteroides (strain DSM 266 / SMG 266 / 2430) protein is Probable nicotinate-nucleotide adenylyltransferase.